We begin with the raw amino-acid sequence, 411 residues long: tRNA pseudouridine synthase Pus10 (411 aa).

The 128-residue stretch at 65-192 folds into the THUMP domain; that stretch reads ALAKCHLPTR…SGQVKVVRNP (128 aa). The Nucleophile role is filled by Asp-244. Positions 305 and 376 each coordinate substrate.

It belongs to the pseudouridine synthase Pus10 family.

It carries out the reaction uridine(54) in tRNA = pseudouridine(54) in tRNA. It catalyses the reaction uridine(55) in tRNA = pseudouridine(55) in tRNA. Its function is as follows. Responsible for synthesis of pseudouridine from uracil-54 and uracil-55 in the psi GC loop of transfer RNAs. This is tRNA pseudouridine synthase Pus10 from Pyrobaculum arsenaticum (strain DSM 13514 / JCM 11321 / PZ6).